A 318-amino-acid polypeptide reads, in one-letter code: Pheromone-regulated membrane protein 5 (318 aa).

Residues 78–98 (FIXVGGIAGVIFLAILLWWVI) traverse the membrane as a helical segment. Residue S129 is modified to Phosphoserine. Residues 238–247 (TISSSSASSL) show a composition bias toward low complexity. A disordered region spans residues 238 to 318 (TISSSSASSL…HMLEGKEQDE (81 aa)). Over residues 250 to 261 (GNEKEVGEDIRK) the composition is skewed to basic and acidic residues. Residues 276 to 285 (SPESDGSVNR) are compositionally biased toward polar residues. S279, S282, and S288 each carry phosphoserine. Positions 309 to 318 (HMLEGKEQDE) are enriched in basic and acidic residues. A Glycyl lysine isopeptide (Lys-Gly) (interchain with G-Cter in ubiquitin) cross-link involves residue K314.

Belongs to the PRM5 family.

The protein resides in the membrane. The chain is Pheromone-regulated membrane protein 5 (PRM5) from Saccharomyces cerevisiae (strain FostersO) (Baker's yeast).